The primary structure comprises 84 residues: Acetylcholine receptor subunit alpha (84 aa).

C7 and C21 are oxidised to a cystine. N-linked (GlcNAc...) asparagine glycans are attached at residues N20 and N66. The cysteines at positions 71 and 72 are disulfide-linked.

The protein belongs to the ligand-gated ion channel (TC 1.A.9) family. Acetylcholine receptor (TC 1.A.9.1) subfamily. Alpha-1/CHRNA1 sub-subfamily. In terms of assembly, one of the alpha chains that assemble within the acetylcholine receptor, a pentamer of two alpha chains, a beta, a delta, and a gamma (in immature muscle) or epsilon (in mature muscle) chains. The muscle heteropentamer composed of alpha-1, beta-1, delta, epsilon subunits interacts with the alpha-conotoxin ImII.

It is found in the postsynaptic cell membrane. The protein resides in the cell membrane. The enzyme catalyses K(+)(in) = K(+)(out). It carries out the reaction Na(+)(in) = Na(+)(out). Upon acetylcholine binding, the AChR responds by an extensive change in conformation that affects all subunits and leads to opening of an ion-conducting channel across the plasma membrane. The polypeptide is Acetylcholine receptor subunit alpha (CHRNA1) (Herpestes ichneumon (Egyptian mongoose)).